Here is a 234-residue protein sequence, read N- to C-terminus: MKIIVVKNASELGKQAFDLLAKAVDEGAKTLGLATGSSPVELYQEIVASQLDFSQMTSVNLDEYVGLSPENPQSYHYFMNQHLFQYKPFKRSYLPDGQTKDIQAECGRYNQILAENPVDLQVLGIGQNGHIAFNEPGTPFDSVTHEVALTESTIKANARFFNSIDEVPKSAICMGIANIMAAKEIVLLAKGESKAKAIKDMVEGPVTTDVPASVLQKHPNVTVIADQAAASLLK.

Residue Asp-62 is the Proton acceptor; for enolization step of the active site. Asn-128 acts as the For ring-opening step in catalysis. His-130 (proton acceptor; for ring-opening step) is an active-site residue. Glu-135 (for ring-opening step) is an active-site residue.

Belongs to the glucosamine/galactosamine-6-phosphate isomerase family. NagB subfamily.

It carries out the reaction alpha-D-glucosamine 6-phosphate + H2O = beta-D-fructose 6-phosphate + NH4(+). Its pathway is amino-sugar metabolism; N-acetylneuraminate degradation; D-fructose 6-phosphate from N-acetylneuraminate: step 5/5. Its function is as follows. Catalyzes the reversible isomerization-deamination of glucosamine 6-phosphate (GlcN6P) to form fructose 6-phosphate (Fru6P) and ammonium ion. The sequence is that of Glucosamine-6-phosphate deaminase from Lactobacillus delbrueckii subsp. bulgaricus (strain ATCC 11842 / DSM 20081 / BCRC 10696 / JCM 1002 / NBRC 13953 / NCIMB 11778 / NCTC 12712 / WDCM 00102 / Lb 14).